A 115-amino-acid polypeptide reads, in one-letter code: NADH-ubiquinone oxidoreductase chain 3 (115 aa).

3 consecutive transmembrane segments (helical) span residues 3–23 (LMITLLTNFTLATLLVTIAFW), 55–75 (FFLVAITFLLFDLEIALLLPL), and 84–104 (LNTMLTMALLLIFLLAVSLAY).

The protein belongs to the complex I subunit 3 family. As to quaternary structure, core subunit of respiratory chain NADH dehydrogenase (Complex I) which is composed of 45 different subunits. Interacts with TMEM186. Interacts with TMEM242.

The protein resides in the mitochondrion inner membrane. The catalysed reaction is a ubiquinone + NADH + 5 H(+)(in) = a ubiquinol + NAD(+) + 4 H(+)(out). In terms of biological role, core subunit of the mitochondrial membrane respiratory chain NADH dehydrogenase (Complex I) which catalyzes electron transfer from NADH through the respiratory chain, using ubiquinone as an electron acceptor. Essential for the catalytic activity of complex I. The polypeptide is NADH-ubiquinone oxidoreductase chain 3 (Ovis aries (Sheep)).